The sequence spans 204 residues: ATP phosphoribosyltransferase (204 aa).

The protein belongs to the ATP phosphoribosyltransferase family. Short subfamily.

The protein resides in the cytoplasm. It catalyses the reaction 1-(5-phospho-beta-D-ribosyl)-ATP + diphosphate = 5-phospho-alpha-D-ribose 1-diphosphate + ATP. The protein operates within amino-acid biosynthesis; L-histidine biosynthesis; L-histidine from 5-phospho-alpha-D-ribose 1-diphosphate: step 1/9. Catalyzes the condensation of ATP and 5-phosphoribose 1-diphosphate to form N'-(5'-phosphoribosyl)-ATP (PR-ATP). Has a crucial role in the pathway because the rate of histidine biosynthesis seems to be controlled primarily by regulation of HisG enzymatic activity. The polypeptide is ATP phosphoribosyltransferase (hisG) (Pyrococcus furiosus (strain ATCC 43587 / DSM 3638 / JCM 8422 / Vc1)).